Reading from the N-terminus, the 637-residue chain is tRNA 5-methylaminomethyl-2-thiouridine biosynthesis bifunctional protein MnmC (637 aa).

Positions Met-1 to Arg-231 are tRNA (mnm(5)s(2)U34)-methyltransferase. The FAD-dependent cmnm(5)s(2)U34 oxidoreductase stretch occupies residues Ile-250 to Gly-637.

The protein in the N-terminal section; belongs to the methyltransferase superfamily. tRNA (mnm(5)s(2)U34)-methyltransferase family. This sequence in the C-terminal section; belongs to the DAO family. Requires FAD as cofactor.

It is found in the cytoplasm. The catalysed reaction is 5-aminomethyl-2-thiouridine(34) in tRNA + S-adenosyl-L-methionine = 5-methylaminomethyl-2-thiouridine(34) in tRNA + S-adenosyl-L-homocysteine + H(+). Its function is as follows. Catalyzes the last two steps in the biosynthesis of 5-methylaminomethyl-2-thiouridine (mnm(5)s(2)U) at the wobble position (U34) in tRNA. Catalyzes the FAD-dependent demodification of cmnm(5)s(2)U34 to nm(5)s(2)U34, followed by the transfer of a methyl group from S-adenosyl-L-methionine to nm(5)s(2)U34, to form mnm(5)s(2)U34. The polypeptide is tRNA 5-methylaminomethyl-2-thiouridine biosynthesis bifunctional protein MnmC (Aromatoleum aromaticum (strain DSM 19018 / LMG 30748 / EbN1) (Azoarcus sp. (strain EbN1))).